The sequence spans 713 residues: RNA-binding protein vts1 (713 aa).

Positions 154–188 (NSGLSLDKSLPSSPKGDSPSLSSSLPSLTTKSNLS) are enriched in low complexity. Disordered regions lie at residues 154–208 (NSGL…SSKH), 254–336 (EPPA…RDRG), 356–389 (DESS…SRPL), 554–596 (EKIE…GNEL), and 667–713 (KAAK…SSMD). Composition is skewed to polar residues over residues 189–208 (GNLN…SSKH) and 258–281 (SSAS…NANV). 2 stretches are compositionally biased toward low complexity: residues 282 to 297 (TSSL…SKTT) and 304 to 320 (SKKS…PNTS). Residues 321-330 (FFETPHNNIW) are compositionally biased toward polar residues. Over residues 369–378 (SPPPPPPPPE) the composition is skewed to pro residues. Polar residues predominate over residues 559-569 (PPNNSKNQTYR). The span at 570 to 583 (RSSRGSNKTRKSIS) shows a compositional bias: basic residues. The SAM domain occupies 595-656 (ELPQDIPSWL…LKSFQEVAPL (62 aa)). Polar residues predominate over residues 670–681 (KNQSSESLTSFK). Serine 673 is modified (phosphoserine). The segment covering 691–702 (SGSMSNEISSNS) has biased composition (low complexity). The span at 703–713 (TKQDVSSSSMD) shows a compositional bias: polar residues.

Belongs to the VTS1 family. As to quaternary structure, monomer. Binds to RNA.

The protein localises to the cytoplasm. It localises to the cytosol. Its subcellular location is the P-body. In terms of biological role, RNA-binding protein involved in post-transcriptional regulation through transcript degradation. This Schizosaccharomyces pombe (strain 972 / ATCC 24843) (Fission yeast) protein is RNA-binding protein vts1.